The following is a 490-amino-acid chain: MSSPGDTAVLVLAAGPGTRMRSDTPKVLHPLGGRSMLSHLLHAIAKVAPQHLAVVLGHDHERIAPLIADWADDLGRPIDVALQERPRGTGDAVRCGLSALPDDYAGVLVVTSGDTPLLDADTVADLIAGHTATRAAVTVLTTTLSDPSGYGRILRTQDNEVTAIVEHADATESQREIREVNAGVYAFDTAALRSALNRLSADNAQQELYLTDVIAILRGDGLPIRARHVDDSALVAGVNNRVQLAQLGAELNRRIVAAHQLAGVTVVDPATTWIDVDVTIGRDTVIHPGTQLLGRTQIGGHCVVGPDTTLTDVSVGDGASVVRTHGTGSSVGAGATVGPFAYLRPGTVLGDDGKLGAFVETKNATIGTGTKVPHLTYVGDADIGEHSNIGASSVFVNYDGESKRRTTVGSHVRTGSDTMFVAPVTVGDGAYTGAGTVVREDVPPGALAVSAGPQRNIEGWVRRKRPGSAAARAAEAAEKAAGGRPAGEAE.

The pyrophosphorylase stretch occupies residues 1–241 (MSSPGDTAVL…SALVAGVNNR (241 aa)). Residues 12-15 (LAAG), K26, Q83, 88-89 (GT), 112-114 (SGD), G151, E166, N181, and N239 each bind UDP-N-acetyl-alpha-D-glucosamine. D114 serves as a coordination point for Mg(2+). A Mg(2+)-binding site is contributed by N239. Residues 242-262 (VQLAQLGAELNRRIVAAHQLA) are linker. The interval 263-490 (GVTVVDPATT…AGGRPAGEAE (228 aa)) is N-acetyltransferase. 2 residues coordinate UDP-N-acetyl-alpha-D-glucosamine: R344 and K362. H374 functions as the Proton acceptor in the catalytic mechanism. Y377 and N388 together coordinate UDP-N-acetyl-alpha-D-glucosamine. Acetyl-CoA is bound by residues A391, 397–398 (NY), S416, and A434. The disordered stretch occupies residues 462 to 490 (RRKRPGSAAARAAEAAEKAAGGRPAGEAE). The segment covering 467–490 (GSAAARAAEAAEKAAGGRPAGEAE) has biased composition (low complexity).

This sequence in the N-terminal section; belongs to the N-acetylglucosamine-1-phosphate uridyltransferase family. In the C-terminal section; belongs to the transferase hexapeptide repeat family. Homotrimer. Mg(2+) is required as a cofactor.

It is found in the cytoplasm. It catalyses the reaction alpha-D-glucosamine 1-phosphate + acetyl-CoA = N-acetyl-alpha-D-glucosamine 1-phosphate + CoA + H(+). The catalysed reaction is N-acetyl-alpha-D-glucosamine 1-phosphate + UTP + H(+) = UDP-N-acetyl-alpha-D-glucosamine + diphosphate. Its pathway is nucleotide-sugar biosynthesis; UDP-N-acetyl-alpha-D-glucosamine biosynthesis; N-acetyl-alpha-D-glucosamine 1-phosphate from alpha-D-glucosamine 6-phosphate (route II): step 2/2. It participates in nucleotide-sugar biosynthesis; UDP-N-acetyl-alpha-D-glucosamine biosynthesis; UDP-N-acetyl-alpha-D-glucosamine from N-acetyl-alpha-D-glucosamine 1-phosphate: step 1/1. The protein operates within bacterial outer membrane biogenesis; LPS lipid A biosynthesis. Functionally, catalyzes the last two sequential reactions in the de novo biosynthetic pathway for UDP-N-acetylglucosamine (UDP-GlcNAc). The C-terminal domain catalyzes the transfer of acetyl group from acetyl coenzyme A to glucosamine-1-phosphate (GlcN-1-P) to produce N-acetylglucosamine-1-phosphate (GlcNAc-1-P), which is converted into UDP-GlcNAc by the transfer of uridine 5-monophosphate (from uridine 5-triphosphate), a reaction catalyzed by the N-terminal domain. The chain is Bifunctional protein GlmU from Mycolicibacterium paratuberculosis (strain ATCC BAA-968 / K-10) (Mycobacterium paratuberculosis).